The primary structure comprises 389 residues: tRNA-specific 2-thiouridylase MnmA (389 aa).

ATP is bound by residues 35–42 (GMSGGVDS) and methionine 61. The tract at residues 121-123 (NPD) is interaction with target base in tRNA. Cysteine 126 acts as the Nucleophile in catalysis. A disulfide bridge connects residues cysteine 126 and cysteine 223. Glycine 151 provides a ligand contact to ATP. The tract at residues 173-175 (KDQ) is interaction with tRNA. Cysteine 223 acts as the Cysteine persulfide intermediate in catalysis. Positions 335–336 (RY) are interaction with tRNA.

Belongs to the MnmA/TRMU family.

The protein resides in the cytoplasm. It catalyses the reaction S-sulfanyl-L-cysteinyl-[protein] + uridine(34) in tRNA + AH2 + ATP = 2-thiouridine(34) in tRNA + L-cysteinyl-[protein] + A + AMP + diphosphate + H(+). In terms of biological role, catalyzes the 2-thiolation of uridine at the wobble position (U34) of tRNA, leading to the formation of s(2)U34. This chain is tRNA-specific 2-thiouridylase MnmA, found in Actinobacillus pleuropneumoniae serotype 3 (strain JL03).